The sequence spans 463 residues: Protein translocase subunit SecY (463 aa).

Over 1–20 (MGFMDFLAKMGENLPAVSKP) the chain is Cytoplasmic. A helical membrane pass occupies residues 21-47 (KDKPTLTRKLLWTFIGLIVYLLMASIP). Residues 48–60 (LYGVTSSNSFLSN) lie on the Extracellular side of the membrane. The helical intramembrane region spans 61 to 68 (FLAQQIIF). The discontinuously helical transmembrane segment at 61 to 89 (FLAQQIIFASSQGTLAQLGIGPVITSGLI) threads the bilayer. An intramembrane segment occupies 69-80 (ASSQGTLAQLGI). An intramembrane region (helical) is located at residues 81-89 (GPVITSGLI). Residues 90 to 110 (MQILVGSKLINVDLTTQEGKS) are Cytoplasmic-facing. Residues 111-134 (KFTQAEKALALIFIIVESSLFGYV) traverse the membrane as a helical segment. Topologically, residues 135 to 142 (FTRATSNI) are extracellular. The chain crosses the membrane as a helical span at residues 143 to 167 (LLPIIVVVQLIIASYIILLLDEMIQ). At 168-174 (KGWGLGS) the chain is on the cytoplasmic side. A helical membrane pass occupies residues 175 to 193 (GVSLFIMAGIMKVIFWNMF). At 194–236 (GIVSVQSQNLPVGFFPLLVSYITSGRNLQEIVLNTSSTTPYQP) the chain is on the extracellular side. A helical transmembrane segment spans residues 237–258 (DLIGLIATVGLTILIVYLVNTN). At 259–283 (IYIPVTTQRLRGIRTTVPLNFLYVS) the chain is on the cytoplasmic side. The chain crosses the membrane as a helical span at residues 284–305 (SIPVIFVSVLGADIQLFASLAN). Topologically, residues 306–341 (SISNSASGILTDIANAFFFPPQGVPHSVYALVVDPV) are extracellular. The helical transmembrane segment at 342–361 (GAAIYAAVFIVLSIVFGMLW) threads the bilayer. The Cytoplasmic segment spans residues 362 to 404 (IDVAGLDPKTQAEQMIRSGIEIPGMRTNPRIIEGILSKYIYAL). The helical transmembrane segment at 405 to 423 (GFFSSLIVGLIAVVATFLG) threads the bilayer. Topologically, residues 424-426 (TYG) are extracellular. Residues 427–441 (TGVGLLLAITIAMQY) traverse the membrane as a helical segment. The Cytoplasmic segment spans residues 442 to 463 (YNLLAYERTLEMYPLLKRIVGE).

The protein belongs to the SecY/SEC61-alpha family. As to quaternary structure, component of the Sec protein translocase complex. Heterotrimer consisting of alpha (SecY), beta (SecG) and gamma (SecE) subunits. The heterotrimers can form oligomers, although 1 heterotrimer is thought to be able to translocate proteins. Interacts with the ribosome. May interact with SecDF, and other proteins may be involved.

It localises to the cell membrane. In terms of biological role, the central subunit of the protein translocation channel SecYEG. Consists of two halves formed by TMs 1-5 and 6-10. These two domains form a lateral gate at the front which open onto the bilayer between TMs 2 and 7, and are clamped together by SecE at the back. The channel is closed by both a pore ring composed of hydrophobic SecY resides and a short helix (helix 2A) on the extracellular side of the membrane which forms a plug. The plug probably moves laterally to allow the channel to open. The ring and the pore may move independently. In Sulfolobus acidocaldarius (strain ATCC 33909 / DSM 639 / JCM 8929 / NBRC 15157 / NCIMB 11770), this protein is Protein translocase subunit SecY.